A 230-amino-acid polypeptide reads, in one-letter code: Fibronectin type III domain-containing protein 4 (230 aa).

The signal sequence occupies residues 1–40 (MPGCLPADSVGTMASLMPLSPYLSPTVLLLVSCDLGFVRA). The Extracellular segment spans residues 41-163 (DRPPSPVNVT…GLDGERPLQT (123 aa)). The Fibronectin type-III domain maps to 43 to 136 (PPSPVNVTVT…PRVHFRTLKG (94 aa)). Asparagine 48 and asparagine 143 each carry an N-linked (GlcNAc...) asparagine glycan. The disordered stretch occupies residues 118 to 156 (GLRGESPPGPRVHFRTLKGSDRLPSNSSSPGDITVEGLD). The helical transmembrane segment at 164–184 (GEVVIIVVVLLMWAAVIGLFC) threads the bilayer. At 185–230 (RQYDIIKDNDSNNNPKEKGKGPEQSPQGRPVGTRQKKSPSINTIDV) the chain is on the cytoplasmic side. The span at 193–205 (NDSNNNPKEKGKG) shows a compositional bias: basic and acidic residues. Residues 193–230 (NDSNNNPKEKGKGPEQSPQGRPVGTRQKKSPSINTIDV) are disordered.

The protein resides in the membrane. The protein localises to the secreted. Its function is as follows. Has anti-inflammatory properties. In the colon, acts on macrophages to down-regulate inflammation. May suppress osteoclastogenesis and mature osteoclast resorptive function. In white adipose tissue, decreases local inflammation, via interaction with GPR116. Also required for proper systemic glucose tolerance, specifically sensitizing white adipocytes to insulin and promoting glucose uptake. The insulin sensitizing function in adipose tissue is mediated by interaction with ADGRF5/GPR116 and activation of cAMP signaling. The polypeptide is Fibronectin type III domain-containing protein 4 (FNDC4) (Bos taurus (Bovine)).